We begin with the raw amino-acid sequence, 358 residues long: Neutral protease 2 homolog MEP8 (358 aa).

Residues 1–19 (MKLSSILLALAALVSPAFS) form the signal peptide. Residues 20–179 (YAISHLPRSE…EKAIKPVDKR (160 aa)) constitute a propeptide that is removed on maturation. Intrachain disulfides connect Cys-186/Cys-256 and Cys-263/Cys-281. His-305 serves as a coordination point for Zn(2+). Glu-306 is an active-site residue. Zn(2+) contacts are provided by His-309 and Asp-320.

It belongs to the peptidase M35 family. The cofactor is Zn(2+).

The protein localises to the secreted. It catalyses the reaction Preferential cleavage of bonds with hydrophobic residues in P1'. Also 3-Asn-|-Gln-4 and 8-Gly-|-Ser-9 bonds in insulin B chain.. Its function is as follows. Secreted metalloproteinase that allows assimilation of proteinaceous substrates. Shows high activities on basic nuclear substrates such as histone and protamine. May be involved in virulence. The polypeptide is Neutral protease 2 homolog MEP8 (MEP8) (Coccidioides posadasii (strain C735) (Valley fever fungus)).